The following is a 104-amino-acid chain: QPKSTPTLTVFPPSTEELQGNKATLVCLISDFYPSDVEVAWKANGAPISQGVDTANPTKQGNKYIASSFLRLTAEQWRSRNSFTCQVTHEGNTVEKSLSPAECV.

The Ig-like domain maps to 6–99 (PTLTVFPPST…EGNTVEKSLS (94 aa)). C27 and C85 form a disulfide bridge.

This is Ig lambda-2 chain C region from Rattus norvegicus (Rat).